The chain runs to 360 residues: Nucleoporin SEH1-B (360 aa).

6 WD repeats span residues 10 to 49 (DHKDLIHDVSFDFHGRRMATCSSDQSVKVWDKSENVNWHC), 55 to 96 (THSG…SNDK), 111 to 152 (DSRT…NLSQ), 160 to 210 (SCKL…RKYA), 217 to 258 (SVSD…KELS), and 276 to 315 (NHNSQVWRVSWNITGTVLASSGDDGTVRLWKANYMDNWKC).

It belongs to the WD repeat SEC13 family. Component of the Nup107-160 subcomplex of the nuclear pore complex (NPC). The Nup107-160 subcomplex includes NUP160, NUP133, NUP107, NUP98, NUP85, NUP43, NUP37, SEH1 and SEC13. Component of the GATOR2 subcomplex, composed of MIOS, SEC13, SEH1L, WDR24 and WDR59. The GATOR2 complex interacts with CASTOR1 and CASTOR2; the interaction is negatively regulated by arginine. The GATOR2 complex interacts with SESN1, SESN2 and SESN3; the interaction is negatively regulated by amino acids.

It is found in the chromosome. The protein resides in the centromere. It localises to the kinetochore. The protein localises to the nucleus. Its subcellular location is the nuclear pore complex. It is found in the lysosome membrane. Its activity is regulated as follows. The GATOR2 complex is negatively regulated by the upstream amino acid sensors CASTOR1 and SESN2, which sequester the GATOR2 complex in absence of amino acids. In the presence of abundant amino acids, GATOR2 is released from CASTOR1 and SESN2 and activated. Functionally, component of the Nup107-160 subcomplex of the nuclear pore complex (NPC). The Nup107-160 subcomplex is required for the assembly of a functional NPC. The Nup107-160 subcomplex is also required for normal kinetochore microtubule attachment, mitotic progression and chromosome segregation. This subunit plays a role in recruitment of the Nup107-160 subcomplex to the kinetochore. In terms of biological role, as a component of the GATOR2 complex, functions as an activator of the amino acid-sensing branch of the mTORC1 signaling pathway. The GATOR2 complex indirectly activates mTORC1 through the inhibition of the GATOR1 subcomplex. GATOR2 probably acts as an E3 ubiquitin-protein ligase toward GATOR1. In the presence of abundant amino acids, the GATOR2 complex mediates ubiquitination of the NPRL2 core component of the GATOR1 complex, leading to GATOR1 inactivation. In the absence of amino acids, GATOR2 is inhibited, activating the GATOR1 complex. The chain is Nucleoporin SEH1-B (seh1l-b) from Xenopus laevis (African clawed frog).